The chain runs to 387 residues: Cysteine desulfurase (387 aa).

Pyridoxal 5'-phosphate contacts are provided by residues 72-73, asparagine 152, glutamine 180, and 200-202; these read GT and SAH. Position 203 is an N6-(pyridoxal phosphate)lysine (lysine 203). Pyridoxal 5'-phosphate is bound at residue threonine 238. The Cysteine persulfide intermediate role is filled by cysteine 323. Cysteine 323 provides a ligand contact to [2Fe-2S] cluster.

Belongs to the class-V pyridoxal-phosphate-dependent aminotransferase family. NifS/IscS subfamily. Homodimer. The cofactor is pyridoxal 5'-phosphate.

It carries out the reaction (sulfur carrier)-H + L-cysteine = (sulfur carrier)-SH + L-alanine. Functionally, catalyzes the removal of elemental sulfur atoms from cysteine to produce alanine. Seems to participate in the biosynthesis of the nitrogenase metalloclusters by providing the inorganic sulfur required for the Fe-S core formation. This chain is Cysteine desulfurase, found in Cereibacter sphaeroides (Rhodobacter sphaeroides).